A 262-amino-acid chain; its full sequence is MEKKITPSELELNEFIKIINEMSGIDLTDKKNILALKLNKFLEGTNTKNFSEFLGKLKSNRQLKQETLDFVTIGETYFLRELAQLKEIIYYAKSLEKRVNILSAPCSSGEEVYSLALLAAQNFIKDMYILGVDINSSVIEKAKLGKYQGRTLQRLSESEKRRFFLESEDKFYTINKNELCTCKFELCNVFEEKFSRLGKFDIIASRNMIIYFDHESKLKLMERFHRILNDKGRLYVGNADLIPETIYFKKIFSPRGVYYEKV.

Positions methionine 1–valine 262 constitute a CheR-type methyltransferase domain. S-adenosyl-L-methionine is bound by residues threonine 76, arginine 80, glutamate 111, aspartate 133, asparagine 188–valine 189, and arginine 206–asparagine 207.

It carries out the reaction L-glutamyl-[protein] + S-adenosyl-L-methionine = [protein]-L-glutamate 5-O-methyl ester + S-adenosyl-L-homocysteine. Methylation of the membrane-bound methyl-accepting chemotaxis proteins (MCP) to form gamma-glutamyl methyl ester residues in MCP. This chain is Chemotaxis protein methyltransferase (cheR), found in Campylobacter jejuni subsp. jejuni serotype O:2 (strain ATCC 700819 / NCTC 11168).